Reading from the N-terminus, the 210-residue chain is Large ribosomal subunit protein uL3 (210 aa).

A disordered region spans residues 139–165 (AEKVHRSPGSIGHATFPGKVFKGKKMP).

This sequence belongs to the universal ribosomal protein uL3 family. In terms of assembly, part of the 50S ribosomal subunit. Forms a cluster with proteins L14 and L19.

Functionally, one of the primary rRNA binding proteins, it binds directly near the 3'-end of the 23S rRNA, where it nucleates assembly of the 50S subunit. This is Large ribosomal subunit protein uL3 from Maridesulfovibrio salexigens (strain ATCC 14822 / DSM 2638 / NCIMB 8403 / VKM B-1763) (Desulfovibrio salexigens).